Consider the following 355-residue polypeptide: UDP-N-acetylglucosamine--N-acetylmuramyl-(pentapeptide) pyrophosphoryl-undecaprenol N-acetylglucosamine transferase (355 aa).

UDP-N-acetyl-alpha-D-glucosamine is bound by residues 15–17, N127, R163, S191, I244, 263–268, and Q288; these read TGG and ALTVSE.

Belongs to the glycosyltransferase 28 family. MurG subfamily.

The protein resides in the cell inner membrane. The catalysed reaction is di-trans,octa-cis-undecaprenyl diphospho-N-acetyl-alpha-D-muramoyl-L-alanyl-D-glutamyl-meso-2,6-diaminopimeloyl-D-alanyl-D-alanine + UDP-N-acetyl-alpha-D-glucosamine = di-trans,octa-cis-undecaprenyl diphospho-[N-acetyl-alpha-D-glucosaminyl-(1-&gt;4)]-N-acetyl-alpha-D-muramoyl-L-alanyl-D-glutamyl-meso-2,6-diaminopimeloyl-D-alanyl-D-alanine + UDP + H(+). Its pathway is cell wall biogenesis; peptidoglycan biosynthesis. Functionally, cell wall formation. Catalyzes the transfer of a GlcNAc subunit on undecaprenyl-pyrophosphoryl-MurNAc-pentapeptide (lipid intermediate I) to form undecaprenyl-pyrophosphoryl-MurNAc-(pentapeptide)GlcNAc (lipid intermediate II). The chain is UDP-N-acetylglucosamine--N-acetylmuramyl-(pentapeptide) pyrophosphoryl-undecaprenol N-acetylglucosamine transferase from Escherichia coli O127:H6 (strain E2348/69 / EPEC).